Reading from the N-terminus, the 312-residue chain is Aspartate carbamoyltransferase catalytic subunit (312 aa).

Residues arginine 58 and threonine 59 each contribute to the carbamoyl phosphate site. An L-aspartate-binding site is contributed by lysine 86. The carbamoyl phosphate site is built by arginine 108, histidine 136, and glutamine 139. L-aspartate is bound by residues arginine 169 and arginine 223. Carbamoyl phosphate is bound by residues glycine 264 and proline 265.

Belongs to the aspartate/ornithine carbamoyltransferase superfamily. ATCase family. As to quaternary structure, heterododecamer (2C3:3R2) of six catalytic PyrB chains organized as two trimers (C3), and six regulatory PyrI chains organized as three dimers (R2).

The enzyme catalyses carbamoyl phosphate + L-aspartate = N-carbamoyl-L-aspartate + phosphate + H(+). The protein operates within pyrimidine metabolism; UMP biosynthesis via de novo pathway; (S)-dihydroorotate from bicarbonate: step 2/3. In terms of biological role, catalyzes the condensation of carbamoyl phosphate and aspartate to form carbamoyl aspartate and inorganic phosphate, the committed step in the de novo pyrimidine nucleotide biosynthesis pathway. This Syntrophomonas wolfei subsp. wolfei (strain DSM 2245B / Goettingen) protein is Aspartate carbamoyltransferase catalytic subunit.